Consider the following 591-residue polypeptide: Probable cyclin-dependent kinase 9 (591 aa).

An interaction with pch1 region spans residues 1–385 (MKRSSSVSVE…FEQTANGKRQ (385 aa)). The region spanning 36–339 (YHLMEKLGEG…ASMALEHEYF (304 aa)) is the Protein kinase domain. Residues 42-50 (LGEGTFGEV) and Lys65 contribute to the ATP site. The active-site Proton acceptor is the Asp166. Tyr211 carries the post-translational modification Phosphotyrosine. Thr212 carries the phosphothreonine modification. Disordered regions lie at residues 341–534 (TPPY…KTQH) and 549–591 (ARQS…DTPK). The span at 358 to 372 (HEYDKRRKREQRDAN) shows a compositional bias: basic and acidic residues. Polar residues-rich tracts occupy residues 404 to 415 (NYNSQPQYQRGS) and 428 to 465 (NVNYQPKRQQNFKPLTSDLPQKNSEFSETNAMNQTSNH). The interval 442 to 523 (LTSDLPQKNS…NSKVQTTSRA (82 aa)) is binds to pct1. Residues 466-482 (SHADGQRYYRPEQDRSQ) show a composition bias toward basic and acidic residues. A compositionally biased stretch (low complexity) spans 491–502 (GRQGRQSSQSQQ). The span at 503-534 (PAWNVSSRYQNNSKVQTTSRASENADTNKTQH) shows a compositional bias: polar residues. A Phosphothreonine modification is found at Thr565. Position 577 is a phosphoserine (Ser577).

The protein belongs to the protein kinase superfamily. CMGC Ser/Thr protein kinase family. CDC2/CDKX subfamily. In terms of assembly, interacts with pch1 cyclin via its N-terminal domain. Via its C-terminal domain, interacts with RNA triphosphatase pct1 which is involved in mRNA capping. Also interacts with pcm1.

The protein resides in the nucleus. It catalyses the reaction L-seryl-[protein] + ATP = O-phospho-L-seryl-[protein] + ADP + H(+). It carries out the reaction L-threonyl-[protein] + ATP = O-phospho-L-threonyl-[protein] + ADP + H(+). The catalysed reaction is [DNA-directed RNA polymerase] + ATP = phospho-[DNA-directed RNA polymerase] + ADP + H(+). Its activity is regulated as follows. May be activated by autophosphorylation or phosphorylation by a separate activating kinase. In terms of biological role, component of the positive transcription elongation factor b (P-TEFb) which consists of cdk9 and pch1, and which phosphorylates the C-terminal domain (CTD) of RNA polymerase II and spt5. This Schizosaccharomyces pombe (strain 972 / ATCC 24843) (Fission yeast) protein is Probable cyclin-dependent kinase 9 (cdk9).